Consider the following 714-residue polypeptide: Choline transporter-like protein 5 (714 aa).

The Cytoplasmic segment spans residues 1-33; the sequence is MGRRSAAPTSPFGEPRKFDPKFKGPIGKRHCTD. A helical membrane pass occupies residues 34-54; that stretch reads VLCCIIFVVVILGYIALGVVA. At 55 to 237 the chain is on the extracellular side; sequence WIHGDPRKII…KIFEDYASSW (183 aa). Residues Asn83, Asn132, Asn192, and Asn205 are each glycosylated (N-linked (GlcNAc...) asparagine). A helical membrane pass occupies residues 238–258; the sequence is YWILIALFIAMVVSLLFLILL. Topologically, residues 259-261 are cytoplasmic; the sequence is RFT. Residues 262-282 traverse the membrane as a helical segment; it reads AGVFFWIFIIGVIGVVGYGIW. At 283 to 320 the chain is on the extracellular side; it reads HCFWEYDSLKGVPGADLTIYDIGLQTDFRVYLQLRQTW. The chain crosses the membrane as a helical span at residues 321 to 341; the sequence is LAFMILLCIVEVIIILMLIFL. The Cytoplasmic segment spans residues 342–346; sequence RNRIR. A helical transmembrane segment spans residues 347–367; the sequence is IAIALLQEGSRAIGYIMSTLF. Residues 368 to 369 lie on the Extracellular side of the membrane; sequence YP. The helical transmembrane segment at 370 to 390 threads the bilayer; sequence IITFILIAICISYWAVTAVFM. Over 391-455 the chain is Cytoplasmic; the sequence is ATSGEPIYKV…QYILIFQLCN (65 aa). The helical transmembrane segment at 456-476 threads the bilayer; it reads VFVFLWLVNFSIALGQCTLAG. Residues 477–510 lie on the Extracellular side of the membrane; it reads AFASYYWAFKKPADIPACPLFSSFGRAIRYHTGS. The chain crosses the membrane as a helical span at residues 511–531; sequence LALGSLILALVQFIRIILEYL. Residues 532-605 are Cytoplasmic-facing; sequence DHKLKASQNS…RVAVLDKVTD (74 aa). The helical transmembrane segment at 606–626 threads the bilayer; it reads FLLFLGKVFVTGSVGVLAFFF. Residues 627–644 are Extracellular-facing; the sequence is FTRKIPVLTDEAPALNYY. Residues 645-665 traverse the membrane as a helical segment; it reads WVPLLTVLIGSYLIAHGFFSV. Over 666–711 the chain is Cytoplasmic; that stretch reads YAMCVDTLFLCFCEDLERNNGSSSKPYYMSPNLHRILGKKEILSKK.

It belongs to the CTL (choline transporter-like) family.

Its subcellular location is the cell membrane. It catalyses the reaction choline(out) + n H(+)(in) = choline(in) + n H(+)(out). Choline/H+ antiporter. This is Choline transporter-like protein 5 (slc44a5) from Xenopus tropicalis (Western clawed frog).